The following is a 245-amino-acid chain: Malonyl-[acyl-carrier protein] O-methyltransferase (245 aa).

Belongs to the methyltransferase superfamily.

The catalysed reaction is malonyl-[ACP] + S-adenosyl-L-methionine = malonyl-[ACP] methyl ester + S-adenosyl-L-homocysteine. It participates in cofactor biosynthesis; biotin biosynthesis. Its function is as follows. Converts the free carboxyl group of a malonyl-thioester to its methyl ester by transfer of a methyl group from S-adenosyl-L-methionine (SAM). It allows to synthesize pimeloyl-ACP via the fatty acid synthetic pathway. This is Malonyl-[acyl-carrier protein] O-methyltransferase from Calditerrivibrio nitroreducens (strain DSM 19672 / NBRC 101217 / Yu37-1).